A 628-amino-acid polypeptide reads, in one-letter code: tRNA uridine 5-carboxymethylaminomethyl modification enzyme MnmG (628 aa).

14-19 (GAGHAG) is an FAD binding site. 274–288 (GPRYCPSIEDKIVRF) is a binding site for NAD(+).

The protein belongs to the MnmG family. As to quaternary structure, homodimer. Heterotetramer of two MnmE and two MnmG subunits. FAD is required as a cofactor.

The protein resides in the cytoplasm. Its function is as follows. NAD-binding protein involved in the addition of a carboxymethylaminomethyl (cmnm) group at the wobble position (U34) of certain tRNAs, forming tRNA-cmnm(5)s(2)U34. This Clostridium kluyveri (strain ATCC 8527 / DSM 555 / NBRC 12016 / NCIMB 10680 / K1) protein is tRNA uridine 5-carboxymethylaminomethyl modification enzyme MnmG.